Here is a 178-residue protein sequence, read N- to C-terminus: Inorganic pyrophosphatase (178 aa).

K30, R44, and Y56 together coordinate substrate. Mg(2+)-binding residues include D66, D71, and D103. A substrate-binding site is contributed by Y142.

The protein belongs to the PPase family. As to quaternary structure, homohexamer. Requires Mg(2+) as cofactor.

Its subcellular location is the cytoplasm. It catalyses the reaction diphosphate + H2O = 2 phosphate + H(+). Catalyzes the hydrolysis of inorganic pyrophosphate (PPi) forming two phosphate ions. This Xylella fastidiosa (strain 9a5c) protein is Inorganic pyrophosphatase.